The sequence spans 157 residues: Protein Smg (157 aa).

This sequence belongs to the Smg family.

This is Protein Smg from Buchnera aphidicola subsp. Schizaphis graminum (strain Sg).